A 473-amino-acid polypeptide reads, in one-letter code: Photosystem II CP43 reaction center protein (473 aa).

Positions methionine 1–glutamate 14 are excised as a propeptide. N-acetylthreonine is present on threonine 15. Position 15 is a phosphothreonine (threonine 15). Transmembrane regions (helical) follow at residues leucine 69–alanine 93, leucine 134–asparagine 155, lysine 178–threonine 200, lysine 255–serine 275, and tryptophan 291–alanine 312. Glutamate 367 is a [CaMn4O5] cluster binding site. The helical transmembrane segment at arginine 447–proline 471 threads the bilayer.

Belongs to the PsbB/PsbC family. PsbC subfamily. In terms of assembly, PSII is composed of 1 copy each of membrane proteins PsbA, PsbB, PsbC, PsbD, PsbE, PsbF, PsbH, PsbI, PsbJ, PsbK, PsbL, PsbM, PsbT, PsbX, PsbY, PsbZ, Psb30/Ycf12, at least 3 peripheral proteins of the oxygen-evolving complex and a large number of cofactors. It forms dimeric complexes. The cofactor is Binds multiple chlorophylls and provides some of the ligands for the Ca-4Mn-5O cluster of the oxygen-evolving complex. It may also provide a ligand for a Cl- that is required for oxygen evolution. PSII binds additional chlorophylls, carotenoids and specific lipids..

It localises to the plastid. The protein resides in the chloroplast thylakoid membrane. Its function is as follows. One of the components of the core complex of photosystem II (PSII). It binds chlorophyll and helps catalyze the primary light-induced photochemical processes of PSII. PSII is a light-driven water:plastoquinone oxidoreductase, using light energy to abstract electrons from H(2)O, generating O(2) and a proton gradient subsequently used for ATP formation. In Lemna minor (Common duckweed), this protein is Photosystem II CP43 reaction center protein.